The chain runs to 1198 residues: Fibronectin type-III domain-containing protein 3A (1198 aa).

The tract at residues 160-221 is disordered; the sequence is YGDVDAHSTH…PSPINEHNGL (62 aa). A compositionally biased stretch (basic and acidic residues) spans 163–201; it reads VDAHSTHGRSNFRDERSSKTYERLQKKLKDRQGTQKDKM. The span at 202 to 214 shows a compositional bias: low complexity; that stretch reads SSPPSSPQKCPSP. Residues serine 203, serine 207, and serine 213 each carry the phosphoserine modification. 9 Fibronectin type-III domains span residues 268–369, 373–465, 469–562, 566–660, 664–757, 761–851, 861–950, 951–1045, and 1046–1151; these read NIVK…TLSC, IPNP…TSGC, MPAS…TCPD, IPVK…TPAV, PCLP…TAPG, QCKP…TPPS, EISD…TKPL, PPDP…TPKS, and VPAA…TEPP. At lysine 384 the chain carries N6-acetyllysine. The helical transmembrane segment at 1177–1197 threads the bilayer; sequence ILVLFAFFSILIAFIIQYFVI.

Belongs to the FNDC3 family. In terms of tissue distribution, expressed in the odontoblast and nerves in the dental pulp. Also expressed in trachea and to a lesser extent in the brain, liver, lung and kidney.

It localises to the golgi apparatus membrane. Its function is as follows. Mediates spermatid-Sertoli adhesion during spermatogenesis. This chain is Fibronectin type-III domain-containing protein 3A (FNDC3A), found in Homo sapiens (Human).